Here is a 126-residue protein sequence, read N- to C-terminus: C-type natriuretic peptide (126 aa).

Residues 1 to 23 form the signal peptide; it reads MHLSQLIACALLLALLSLRPSEA. The segment at 20–73 is disordered; it reads PSEAKPGTPPKVPRTPPGEELADSQAAGGNQKKGDKTPGSGGANLKGDRSRLLR. The propeptide occupies 24-73; the sequence is KPGTPPKVPRTPPGEELADSQAAGGNQKKGDKTPGSGGANLKGDRSRLLR. Over residues 26-35 the composition is skewed to pro residues; the sequence is GTPPKVPRTP. A disulfide bond links C110 and C126.

The protein belongs to the natriuretic peptide family. Post-translationally, degraded by IDE (in vitro).

The protein resides in the secreted. In terms of biological role, hormone which plays a role in endochondral ossification through regulation of cartilaginous growth plate chondrocytes proliferation and differentiation. May also be vasoactive and natriuretic. Acts by specifically binding and stimulating NPR2 to produce cGMP. Binds the clearance receptor NPR3. In Mus musculus (Mouse), this protein is C-type natriuretic peptide (Nppc).